Here is a 221-residue protein sequence, read N- to C-terminus: Probable septum site-determining protein MinC (221 aa).

This sequence belongs to the MinC family. As to quaternary structure, interacts with MinD and FtsZ.

In terms of biological role, cell division inhibitor that blocks the formation of polar Z ring septums. Rapidly oscillates between the poles of the cell to destabilize FtsZ filaments that have formed before they mature into polar Z rings. Prevents FtsZ polymerization. The polypeptide is Probable septum site-determining protein MinC (Shewanella denitrificans (strain OS217 / ATCC BAA-1090 / DSM 15013)).